The primary structure comprises 142 residues: Hemoglobin subunit alpha-A (142 aa).

The Globin domain maps to 2–142; that stretch reads VLSAADKTNV…VGAVLTAKYR (141 aa). Residue His59 participates in O2 binding. His88 contacts heme b.

This sequence belongs to the globin family. Heterotetramer of two alpha chains and two beta chains. In terms of tissue distribution, red blood cells.

Functionally, involved in oxygen transport from the lung to the various peripheral tissues. In Anas platyrhynchos (Mallard), this protein is Hemoglobin subunit alpha-A (HBAA).